A 488-amino-acid polypeptide reads, in one-letter code: NADH-quinone oxidoreductase subunit N 2 (488 aa).

14 helical membrane passes run 18-38 (FLPE…ELFI), 45-65 (LVLN…LLIP), 81-101 (PLAV…LPFA), 110-130 (SFYG…FVLA), 135-155 (LIIL…LTAL), 169-189 (YLIL…FMYI), 210-230 (LVLG…AVPF), 242-262 (PTPV…IPLV), 274-294 (LVWT…GNLV), 308-328 (SSIA…VIGM), 331-351 (VIYF…VLAL), 375-395 (IAFA…TVGF), 412-434 (WLAF…LVVV), and 458-478 (FALT…WFLI).

Belongs to the complex I subunit 2 family. NDH-1 is composed of 14 different subunits. Subunits NuoA, H, J, K, L, M, N constitute the membrane sector of the complex.

The protein localises to the cell inner membrane. The enzyme catalyses a quinone + NADH + 5 H(+)(in) = a quinol + NAD(+) + 4 H(+)(out). Its function is as follows. NDH-1 shuttles electrons from NADH, via FMN and iron-sulfur (Fe-S) centers, to quinones in the respiratory chain. The immediate electron acceptor for the enzyme in this species is believed to be ubiquinone. Couples the redox reaction to proton translocation (for every two electrons transferred, four hydrogen ions are translocated across the cytoplasmic membrane), and thus conserves the redox energy in a proton gradient. The chain is NADH-quinone oxidoreductase subunit N 2 from Aquifex aeolicus (strain VF5).